The primary structure comprises 98 residues: Integration host factor subunit alpha (98 aa).

The disordered stretch occupies residues 49 to 70 (FGNFDLRDKNQRPGRNPKTGED).

This sequence belongs to the bacterial histone-like protein family. As to quaternary structure, heterodimer of an alpha and a beta chain.

This protein is one of the two subunits of integration host factor, a specific DNA-binding protein that functions in genetic recombination as well as in transcriptional and translational control. The chain is Integration host factor subunit alpha from Shewanella baltica (strain OS223).